The following is a 62-amino-acid chain: Photosystem II reaction center X protein (62 aa).

Residues 26-46 (IASFFAAALLIVIPAAAFLIF) form a helical membrane-spanning segment.

It belongs to the PsbX family. Type 2 subfamily. PSII consists of a core antenna complex that captures photons, and an electron transfer chain that converts photonic excitation into a charge separation. PSII forms dimeric complexes.

It localises to the cellular thylakoid membrane. Functionally, involved in the binding and/or turnover of quinones at the Q(B) site of Photosystem II. This is Photosystem II reaction center X protein from Prochlorococcus marinus subsp. pastoris (strain CCMP1986 / NIES-2087 / MED4).